The sequence spans 560 residues: Chaperonin GroEL 2 (560 aa).

Residues 29–32 (TIGP), 86–90 (DGTTT), Gly413, and Asp492 contribute to the ATP site. A disordered region spans residues 520-542 (DKPEPPSAPGAEGGDPMGGMGGM). The span at 530-542 (AEGGDPMGGMGGM) shows a compositional bias: gly residues.

This sequence belongs to the chaperonin (HSP60) family. In terms of assembly, forms a cylinder of 14 subunits composed of two heptameric rings stacked back-to-back. Interacts with the co-chaperonin GroES.

The protein resides in the cytoplasm. It carries out the reaction ATP + H2O + a folded polypeptide = ADP + phosphate + an unfolded polypeptide.. Together with its co-chaperonin GroES, plays an essential role in assisting protein folding. The GroEL-GroES system forms a nano-cage that allows encapsulation of the non-native substrate proteins and provides a physical environment optimized to promote and accelerate protein folding. The polypeptide is Chaperonin GroEL 2 (Prochlorococcus marinus (strain NATL2A)).